Here is a 469-residue protein sequence, read N- to C-terminus: Cyclin-dependent kinase 14 (469 aa).

3 positions are modified to phosphoserine: S24, S78, and S95. A disordered region spans residues F103–D133. Position 134 is a phosphoserine (S134). The Protein kinase domain maps to Y135–F419. ATP-binding positions include L141–V149 and K164. The active-site Proton acceptor is the D256. The tract at residues E449–H469 is disordered. The segment covering K456 to H469 has biased composition (polar residues).

Belongs to the protein kinase superfamily. CMGC Ser/Thr protein kinase family. CDC2/CDKX subfamily. In terms of assembly, found in a complex with LRP6, CCNY and CAPRIN2 during G2/M stage; CAPRIN2 functions as a scaffold for the complex by binding to CCNY via its N terminus and to CDK14 via its C terminus. Interacts with CCNY; CCNY mediates its recruitment to the plasma membrane and promotes phosphorylation of LRP6. Interacts with CCDN3 and CDKN1A. Interacts with SEPT8. Interacts with 14-3-3 proteina YWHAB, YWHAE, YWHAH and YWHAQ. Highly expressed in brain, pancreas, kidney, heart, testis and ovary. Also detected at lower levels in other tissues except in spleen and thymus where expression is barely detected.

The protein resides in the cell membrane. It is found in the cytoplasm. It localises to the nucleus. It carries out the reaction L-seryl-[protein] + ATP = O-phospho-L-seryl-[protein] + ADP + H(+). The enzyme catalyses L-threonyl-[protein] + ATP = O-phospho-L-threonyl-[protein] + ADP + H(+). Its activity is regulated as follows. Serine/threonine-protein kinase activity is promoted by associated cyclins CCDN3 and CCNY and repressed by CDKN1A. In terms of biological role, serine/threonine-protein kinase involved in the control of the eukaryotic cell cycle, whose activity is controlled by an associated cyclin. Acts as a cell-cycle regulator of Wnt signaling pathway during G2/M phase by mediating the phosphorylation of LRP6 at 'Ser-1490', leading to the activation of the Wnt signaling pathway. Acts as a regulator of cell cycle progression and cell proliferation via its interaction with CCDN3. Phosphorylates RB1 in vitro, however the relevance of such result remains to be confirmed in vivo. May also play a role in meiosis, neuron differentiation and may indirectly act as a negative regulator of insulin-responsive glucose transport. The sequence is that of Cyclin-dependent kinase 14 (CDK14) from Homo sapiens (Human).